We begin with the raw amino-acid sequence, 400 residues long: Phosphoglycerate kinase (400 aa).

Substrate-binding positions include 24–26 (DFN), Arg-40, 63–66 (HFGR), Arg-121, and Arg-154. ATP contacts are provided by residues Lys-205, Gly-296, Glu-327, and 356 to 359 (GGDS).

The protein belongs to the phosphoglycerate kinase family. Monomer.

It is found in the cytoplasm. The enzyme catalyses (2R)-3-phosphoglycerate + ATP = (2R)-3-phospho-glyceroyl phosphate + ADP. The protein operates within carbohydrate degradation; glycolysis; pyruvate from D-glyceraldehyde 3-phosphate: step 2/5. In Thermosynechococcus vestitus (strain NIES-2133 / IAM M-273 / BP-1), this protein is Phosphoglycerate kinase.